Consider the following 148-residue polypeptide: Putative nickel-responsive regulator (148 aa).

Ni(2+) is bound by residues His88, His99, His101, and Cys107.

This sequence belongs to the transcriptional regulatory CopG/NikR family. The cofactor is Ni(2+).

Transcriptional regulator. The polypeptide is Putative nickel-responsive regulator (Helicobacter pylori (strain HPAG1)).